Consider the following 114-residue polypeptide: UPF0145 protein TTHA1944 (114 aa).

It belongs to the UPF0145 family.

The sequence is that of UPF0145 protein TTHA1944 from Thermus thermophilus (strain ATCC 27634 / DSM 579 / HB8).